A 495-amino-acid polypeptide reads, in one-letter code: COP9 signalosome complex subunit 2 (495 aa).

Residues Met-1–Val-26 are disordered. Residues Ala-254–Lys-416 form the PCI domain. The segment at Pro-426–Gln-468 is disordered. Residues Asp-430–Gly-441 show a composition bias toward polar residues. Over residues Thr-442 to Ser-455 the composition is skewed to low complexity.

This sequence belongs to the CSN2 family. As to quaternary structure, component of the CSN complex, probably composed of csn-1, csn-2, csn-3, csn-4, csn-5, csn-6 and csn-7. Within the complex it probably interacts directly with csn-1, csn-3 and csn-4.

It localises to the cytoplasm. The protein resides in the nucleus. Functionally, essential component of the COP9 signalosome complex (CSN), a complex involved in various cellular and developmental processes. The CSN complex is an essential regulator of the ubiquitin (Ubl) conjugation pathway by mediating the deneddylation of the cullin subunits of the SCF-type E3 ligase complexes, leading to decrease the Ubl ligase activity of SCF. The CSN complex plays an essential role in embryogenesis and oogenesis and is required to regulate microtubule stability in the early embryo. Mediates mei-3/katanin targeting for degradation at the meiosis to mitosis transition via deneddylation of cul-3. The chain is COP9 signalosome complex subunit 2 (csn-2) from Caenorhabditis elegans.